The following is a 336-amino-acid chain: Fructose-1,6-bisphosphatase class 1 (336 aa).

Glu-92, Asp-115, Leu-117, and Asp-118 together coordinate Mg(2+). Substrate is bound by residues 118–121 (DGSS), Asn-211, Tyr-244, 262–264 (YLY), and Lys-274. Position 280 (Glu-280) interacts with Mg(2+).

It belongs to the FBPase class 1 family. As to quaternary structure, homotetramer. It depends on Mg(2+) as a cofactor.

It localises to the cytoplasm. The catalysed reaction is beta-D-fructose 1,6-bisphosphate + H2O = beta-D-fructose 6-phosphate + phosphate. It participates in carbohydrate biosynthesis; gluconeogenesis. This Aliivibrio fischeri (strain ATCC 700601 / ES114) (Vibrio fischeri) protein is Fructose-1,6-bisphosphatase class 1.